An 807-amino-acid chain; its full sequence is MSKLSFRARALDAAKPLPIYRGKDMPDLNDCVSINRAVPQMPTGMEKEEESEHHLQRAISAQQVFREKKESMVIPVPEAESNVNYYNRLYKGEFKQPKQFIHIQPFNLDNEQPDYDMDSEDETLLNRLNRKMEIKPLQFEIMIDRLEKASSNQLVTLQEAKLLLNEDDYLIKAVYDYWVRKRKNCRGPSLIPQIKQEKRDGSTNNDPYVAFRRRTEKMQTRKNRKNDEASYEKMLKLRREFSRAITILEMIKRREKTKRELLHLTLEVVEKRYHLGDYGGEILNEVKISRSEKELYATPATLHNGNHHKVQECKTKHPHHLSLKEEASDVVRQKKKYPKKPKAEALITSQQPTPETLPVINKSDIKQYDFHSSDEDEFPQVLSPVSEPEEENDPDGPCAFRRRAGCQYYAPRLDQANHSCENSELADLDKLRYRHCLTTLTVPRRCIGFARRRIGRGGRVIMDRISTEHDPVLKQIDPEMLNSFSSSSQTIDFSSNFSRTNASSKHCENRLSLSEILSNIRSCRLQCFQPRLLNLQDSDSEECTSRKPGQTVNNKRVSAASVALLNTSKNGISVTGGITEEQFQTHQQQLVQMQRQQLAQLQQKQQSQHSSQQTHPKAQGSSTSDCMSKTLDSASAHFAASAVVSAPVPSRSEVAKEQNTGHNNINGVVQPSGTSKTLYSTNMALSSSPGISAVQLVRTVGHTTTNHLIPALCTSSPQTLPMNNSCLTNAVHLNNVSVVSPVNVHINTRTSAPSPTALKLATVAASMDRVPKVTPSSAISSIARENHEPERLGLNGIAETTVAMEVT.

Glycyl lysine isopeptide (Lys-Gly) (interchain with G-Cter in SUMO2) cross-links involve residues Lys135, Lys195, Lys324, and Lys362. Positions Asp376–Gly396 are disordered. At Ser538 the chain carries Phosphoserine. Positions Gln600–Gln613 are enriched in low complexity. 2 disordered regions span residues Gln600 to Ser628 and Ser645 to Gly673. Polar residues-rich tracts occupy residues Thr614–Ser628 and Glu657–Gly673. At Ser754 the chain carries Phosphoserine.

This sequence belongs to the enhancer of polycomb family.

Its subcellular location is the nucleus. May play a role in transcription or DNA repair. This is Enhancer of polycomb homolog 2 (EPC2) from Homo sapiens (Human).